The primary structure comprises 440 residues: Transposon Ty1-BR Gag polyprotein (440 aa).

Composition is skewed to polar residues over residues 1–10 (MESQQLSNYP), 48–60 (TKAN…TPAS), and 127–152 (QSQF…GNTF). 3 disordered regions span residues 1–93 (MESQ…MMTQ), 126–173 (PQSQ…RPPP), and 352–440 (GSRN…PETY). The segment covering 153–165 (TDSSSADSDMTST) has biased composition (low complexity). An RNA-binding region spans residues 299-401 (NNGIHINNKV…NSKSKTARAH (103 aa)). Residues 402–418 (NVSTSNNSPSTDNDSIS) are compositionally biased toward low complexity. Serine 416 is subject to Phosphoserine. The segment covering 419–428 (KSTTEPIQLN) has biased composition (polar residues). Over residues 429 to 440 (NKHDLHLRPETY) the composition is skewed to basic and acidic residues.

Homotrimer.

It is found in the cytoplasm. Its function is as follows. Capsid protein (CA) is the structural component of the virus-like particle (VLP), forming the shell that encapsulates the retrotransposons dimeric RNA genome. The particles are assembled from trimer-clustered units and there are holes in the capsid shells that allow for the diffusion of macromolecules. CA also has nucleocapsid-like chaperone activity, promoting primer tRNA(i)-Met annealing to the multipartite primer-binding site (PBS), dimerization of Ty1 RNA and initiation of reverse transcription. In Saccharomyces cerevisiae (strain ATCC 204508 / S288c) (Baker's yeast), this protein is Transposon Ty1-BR Gag polyprotein (TY1A-BR).